The following is a 180-amino-acid chain: Inosine/xanthosine triphosphatase (180 aa).

8 to 13 (TTNPAK) is a substrate binding site. D38 and E68 together coordinate Mg(2+). Residue 68–69 (EA) coordinates substrate.

Belongs to the YjjX NTPase family. In terms of assembly, homodimer. Mg(2+) serves as cofactor. It depends on Mn(2+) as a cofactor.

The enzyme catalyses XTP + H2O = XDP + phosphate + H(+). The catalysed reaction is ITP + H2O = IDP + phosphate + H(+). Phosphatase that hydrolyzes non-canonical purine nucleotides such as XTP and ITP to their respective diphosphate derivatives. Probably excludes non-canonical purines from DNA/RNA precursor pool, thus preventing their incorporation into DNA/RNA and avoiding chromosomal lesions. This Yersinia pseudotuberculosis serotype IB (strain PB1/+) protein is Inosine/xanthosine triphosphatase.